Reading from the N-terminus, the 160-residue chain is SsrA-binding protein (160 aa).

The disordered stretch occupies residues 136–160 (KRHVEKERDANREVQRAMRSKGKDD).

It belongs to the SmpB family.

The protein resides in the cytoplasm. Its function is as follows. Required for rescue of stalled ribosomes mediated by trans-translation. Binds to transfer-messenger RNA (tmRNA), required for stable association of tmRNA with ribosomes. tmRNA and SmpB together mimic tRNA shape, replacing the anticodon stem-loop with SmpB. tmRNA is encoded by the ssrA gene; the 2 termini fold to resemble tRNA(Ala) and it encodes a 'tag peptide', a short internal open reading frame. During trans-translation Ala-aminoacylated tmRNA acts like a tRNA, entering the A-site of stalled ribosomes, displacing the stalled mRNA. The ribosome then switches to translate the ORF on the tmRNA; the nascent peptide is terminated with the 'tag peptide' encoded by the tmRNA and targeted for degradation. The ribosome is freed to recommence translation, which seems to be the essential function of trans-translation. The protein is SsrA-binding protein of Ectopseudomonas mendocina (strain ymp) (Pseudomonas mendocina).